A 314-amino-acid chain; its full sequence is 4-hydroxy-3-methylbut-2-enyl diphosphate reductase (314 aa).

Residue Cys-12 participates in [4Fe-4S] cluster binding. (2E)-4-hydroxy-3-methylbut-2-enyl diphosphate-binding residues include His-41 and His-74. Dimethylallyl diphosphate-binding residues include His-41 and His-74. Residues His-41 and His-74 each contribute to the isopentenyl diphosphate site. A [4Fe-4S] cluster-binding site is contributed by Cys-96. His-124 provides a ligand contact to (2E)-4-hydroxy-3-methylbut-2-enyl diphosphate. Residue His-124 coordinates dimethylallyl diphosphate. His-124 contributes to the isopentenyl diphosphate binding site. The Proton donor role is filled by Glu-126. Thr-167 serves as a coordination point for (2E)-4-hydroxy-3-methylbut-2-enyl diphosphate. Cys-197 lines the [4Fe-4S] cluster pocket. (2E)-4-hydroxy-3-methylbut-2-enyl diphosphate-binding residues include Ser-225, Ser-226, Asn-227, and Ser-269. Dimethylallyl diphosphate is bound by residues Ser-225, Ser-226, Asn-227, and Ser-269. 4 residues coordinate isopentenyl diphosphate: Ser-225, Ser-226, Asn-227, and Ser-269.

This sequence belongs to the IspH family. [4Fe-4S] cluster is required as a cofactor.

It carries out the reaction isopentenyl diphosphate + 2 oxidized [2Fe-2S]-[ferredoxin] + H2O = (2E)-4-hydroxy-3-methylbut-2-enyl diphosphate + 2 reduced [2Fe-2S]-[ferredoxin] + 2 H(+). It catalyses the reaction dimethylallyl diphosphate + 2 oxidized [2Fe-2S]-[ferredoxin] + H2O = (2E)-4-hydroxy-3-methylbut-2-enyl diphosphate + 2 reduced [2Fe-2S]-[ferredoxin] + 2 H(+). It functions in the pathway isoprenoid biosynthesis; dimethylallyl diphosphate biosynthesis; dimethylallyl diphosphate from (2E)-4-hydroxy-3-methylbutenyl diphosphate: step 1/1. The protein operates within isoprenoid biosynthesis; isopentenyl diphosphate biosynthesis via DXP pathway; isopentenyl diphosphate from 1-deoxy-D-xylulose 5-phosphate: step 6/6. In terms of biological role, catalyzes the conversion of 1-hydroxy-2-methyl-2-(E)-butenyl 4-diphosphate (HMBPP) into a mixture of isopentenyl diphosphate (IPP) and dimethylallyl diphosphate (DMAPP). Acts in the terminal step of the DOXP/MEP pathway for isoprenoid precursor biosynthesis. The chain is 4-hydroxy-3-methylbut-2-enyl diphosphate reductase from Idiomarina loihiensis (strain ATCC BAA-735 / DSM 15497 / L2-TR).